The primary structure comprises 254 residues: uncharacterized protein (254 aa).

The first 22 residues, 1–22 (MKRLKKIVLCISFLFLTIFIGG), serve as a signal peptide directing secretion. Cys23 carries N-palmitoyl cysteine lipidation. Cys23 carries S-diacylglycerol cysteine lipidation.

It belongs to the staphylococcal tandem lipoprotein family.

Its subcellular location is the cell membrane. This is an uncharacterized protein from Staphylococcus aureus (strain MSSA476).